We begin with the raw amino-acid sequence, 166 residues long: MKITKLPSYRQTALIIFAGCVGLILAALYMQEVLGLHPCPLCITQRIFIIGVGLISLIAAIHNPAALGRKVYGCLATLSGVIGAGVSARHVWLQNLPEDQVPACGPDLAYMFDAFPLLDALKLLFAGDGNCADVVASFLGLSIPGWTFVAFVGLIAISVWQGLRKA.

At Met1–Thr12 the chain is on the cytoplasmic side. The chain crosses the membrane as a helical span at residues Ala13–Tyr29. Over Met30–Ile47 the chain is Periplasmic. Cysteines 39 and 42 form a disulfide. Residues Phe48–Pro64 traverse the membrane as a helical segment. The Cytoplasmic segment spans residues Ala65–Lys70. The helical transmembrane segment at Val71 to Ala88 threads the bilayer. At Arg89 to Gly145 the chain is on the periplasmic side. Cys104 and Cys131 are joined by a disulfide. A helical membrane pass occupies residues Trp146 to Arg164. The Cytoplasmic portion of the chain corresponds to Lys165–Ala166.

This sequence belongs to the DsbB family.

The protein resides in the cell inner membrane. Functionally, required for disulfide bond formation in some periplasmic proteins. Acts by oxidizing the DsbA protein. The chain is Disulfide bond formation protein B from Saccharophagus degradans (strain 2-40 / ATCC 43961 / DSM 17024).